A 466-amino-acid chain; its full sequence is Glutamate decarboxylase beta (466 aa).

Residues Thr62 and Asn83 each contribute to the substrate site. Pyridoxal 5'-phosphate contacts are provided by residues 126–127, Thr212, and His275; that span reads SS. An N6-(pyridoxal phosphate)lysine modification is found at Lys276. 3 positions are modified to N6-acetyllysine: Lys446, Lys453, and Lys464.

It belongs to the group II decarboxylase family. As to quaternary structure, homohexamer composed of three dimers. Requires pyridoxal 5'-phosphate as cofactor.

It carries out the reaction L-glutamate + H(+) = 4-aminobutanoate + CO2. Converts glutamate to gamma-aminobutyrate (GABA), consuming one intracellular proton in the reaction. The gad system helps to maintain a near-neutral intracellular pH when cells are exposed to extremely acidic conditions. The ability to survive transit through the acidic conditions of the stomach is essential for successful colonization of the mammalian host by commensal and pathogenic bacteria. The protein is Glutamate decarboxylase beta (gadB) of Shigella flexneri.